Reading from the N-terminus, the 358-residue chain is Probable (S)-tetrahydroprotoberberine N-methyltransferase 2 (358 aa).

Residues Ser98, Gly136, Asn160, Gln164, Asp186, Val187, and Ile202 each contribute to the S-adenosyl-L-methionine site. Cys333 is an active-site residue.

It belongs to the CFA/CMAS family. In terms of assembly, homodimer.

Its subcellular location is the cytoplasm. The enzyme catalyses (S)-stylopine + S-adenosyl-L-methionine = (S)-cis-N-methylstylopine + S-adenosyl-L-homocysteine. The catalysed reaction is (S)-tetrahydropalmatine + S-adenosyl-L-methionine = (S)-cis-N-methyltetrahydropalmatine + S-adenosyl-L-homocysteine. It participates in alkaloid biosynthesis. In terms of biological role, N-methyltransferase with a strict substrate specificity for (R,S)-tetrahydropalmatine or (R,S)-stylopine. This is Probable (S)-tetrahydroprotoberberine N-methyltransferase 2 from Papaver bracteatum (Great scarlet poppy).